Consider the following 106-residue polypeptide: ATP-dependent Clp protease adapter protein ClpS (106 aa).

Belongs to the ClpS family. As to quaternary structure, binds to the N-terminal domain of the chaperone ClpA.

Involved in the modulation of the specificity of the ClpAP-mediated ATP-dependent protein degradation. In Photobacterium profundum (strain SS9), this protein is ATP-dependent Clp protease adapter protein ClpS.